Consider the following 305-residue polypeptide: Acetylglutamate kinase (305 aa).

Substrate contacts are provided by residues 67–68 (GG), Arg-89, and Asn-190.

The protein belongs to the acetylglutamate kinase family. ArgB subfamily.

The protein localises to the cytoplasm. The enzyme catalyses N-acetyl-L-glutamate + ATP = N-acetyl-L-glutamyl 5-phosphate + ADP. It functions in the pathway amino-acid biosynthesis; L-arginine biosynthesis; N(2)-acetyl-L-ornithine from L-glutamate: step 2/4. Its function is as follows. Catalyzes the ATP-dependent phosphorylation of N-acetyl-L-glutamate. This chain is Acetylglutamate kinase, found in Bifidobacterium longum subsp. infantis (strain ATCC 15697 / DSM 20088 / JCM 1222 / NCTC 11817 / S12).